The following is a 284-amino-acid chain: Pseudouridine-5'-phosphate glycosidase (284 aa).

Catalysis depends on E17, which acts as the Proton donor. Substrate-binding residues include K77 and V97. Residue D126 participates in Mn(2+) binding. A substrate-binding site is contributed by 128–130 (SQD). Residue K147 is the Nucleophile of the active site.

The protein belongs to the pseudouridine-5'-phosphate glycosidase family. As to quaternary structure, homotrimer. Mn(2+) serves as cofactor.

It catalyses the reaction D-ribose 5-phosphate + uracil = psi-UMP + H2O. In terms of biological role, catalyzes the reversible cleavage of pseudouridine 5'-phosphate (PsiMP) to ribose 5-phosphate and uracil. Functions biologically in the cleavage direction, as part of a pseudouridine degradation pathway. This chain is Pseudouridine-5'-phosphate glycosidase, found in Thermotoga petrophila (strain ATCC BAA-488 / DSM 13995 / JCM 10881 / RKU-1).